Here is a 462-residue protein sequence, read N- to C-terminus: Gamma-glutamylethanolamide synthetase GlnA4 (462 aa).

The 97-residue stretch at 30–126 folds into the GS beta-grasp domain; that stretch reads GDIDTVVLAF…AVADLAWEDG (97 aa). Residues 133–462 enclose the GS catalytic domain; that stretch reads PRQILRRQLE…WELRRSFERM (330 aa). Mg(2+) contacts are provided by Glu-156 and Glu-158. Glu-214 serves as a coordination point for ATP. Positions 219 and 226 each coordinate Mg(2+). Gly-270 provides a ligand contact to L-glutamate. His-274 is a Mg(2+) binding site. 276-278 is an ATP binding site; the sequence is HLS. The L-glutamate site is built by Arg-325 and Arg-343. Residues Arg-343 and Arg-348 each coordinate ATP. Mg(2+) is bound at residue Glu-359. Position 361 (Arg-361) interacts with L-glutamate.

This sequence belongs to the glutamine synthetase family. It depends on Mg(2+) as a cofactor.

The catalysed reaction is ethanolamine + L-glutamate + ATP = gamma-L-glutamylethanolamide + ADP + phosphate + H(+). It functions in the pathway amine and polyamine degradation; ethanolamine degradation. Its activity is regulated as follows. Very slightly decreased activity with glutamine synthetase (GS) inhibitor methionine sulfoximine (MSO). In terms of biological role, involved in the catabolism of monoamine ethanolamine. Catalyzes the ATP-dependent gamma-glutamylation of ethanolamine. No activity with polyamines. No complementation of the L-glutamine auxotrophy of an E.coli glnA mutant. Enables survival of S.coelicolor under high local environmental ethanolamine conditions. May play a role during starvation conditions to limit intracellular ethanolamine concentration, which in excess is toxic to the cells. The sequence is that of Gamma-glutamylethanolamide synthetase GlnA4 from Streptomyces coelicolor (strain ATCC BAA-471 / A3(2) / M145).